We begin with the raw amino-acid sequence, 506 residues long: Glycine--tRNA ligase (506 aa).

Substrate contacts are provided by R99 and E189. Residues 221 to 223 (RNE), 231 to 236 (FRVREF), 305 to 306 (EL), and 364 to 367 (GVDR) contribute to the ATP site. 236-240 (FEQME) is a substrate binding site. 360–364 (EPSAG) lines the substrate pocket.

It belongs to the class-II aminoacyl-tRNA synthetase family. As to quaternary structure, homodimer.

It is found in the cytoplasm. It catalyses the reaction tRNA(Gly) + glycine + ATP = glycyl-tRNA(Gly) + AMP + diphosphate. Functionally, catalyzes the attachment of glycine to tRNA(Gly). The sequence is that of Glycine--tRNA ligase from Thermus thermophilus (strain ATCC BAA-163 / DSM 7039 / HB27).